Consider the following 470-residue polypeptide: Nuclear receptor ROR-beta (470 aa).

Residues Val18–Phe93 constitute a DNA-binding region (nuclear receptor). NR C4-type zinc fingers lie at residues Cys21–Cys41 and Cys57–Cys81. The segment covering Leu104 to Glu117 has biased composition (basic and acidic residues). The interval Leu104–Glu127 is disordered. The NR LBD domain maps to Glu222 to Leu460. Residues Leu456–Phe461 carry the AF-2 motif.

The protein belongs to the nuclear hormone receptor family. NR1 subfamily. In terms of assembly, monomer. Interacts with CRX. In terms of tissue distribution, expressed in inner and outer neuroblastic layer as well as in the ganglion cell layer of the developing retina. Expressed in bone marrow osteoprogenitor cells.

Its subcellular location is the nucleus. It localises to the nucleoplasm. In terms of biological role, nuclear receptor that binds DNA as a monomer to ROR response elements (RORE) containing a single core motif half-site 5'-AGGTCA-3' preceded by a short A-T-rich sequence. Considered to have intrinsic transcriptional activity, have some natural ligands such as all-trans retinoic acid (ATRA) and other retinoids which act as inverse agonists repressing the transcriptional activity. Required for normal postnatal development of rod and cone photoreceptor cells. Modulates rod photoreceptors differentiation at least by inducing the transcription factor NRL-mediated pathway. In cone photoreceptor cells, regulates transcription of OPN1SW. Involved in the regulation of the period length and stability of the circadian rhythm. May control cytoarchitectural patterning of neocortical neurons during development. May act in a dose-dependent manner to regulate barrel formation upon innervation of layer IV neurons by thalamocortical axons. May play a role in the suppression of osteoblastic differentiation through the inhibition of RUNX2 transcriptional activity. Isoform 1 is critical for hindlimb motor control and for the differentiation of amacrine and horizontal cells in the retina. Regulates the expression of PTF1A synergistically with FOXN4. The polypeptide is Nuclear receptor ROR-beta (Rorb) (Mus musculus (Mouse)).